A 233-amino-acid polypeptide reads, in one-letter code: Probable transglycosylase IsaA (233 aa).

Residues 1–29 (MKKTIMASSLAVALGVTGYAAGTGHQAHA) form the signal peptide.

Belongs to the transglycosylase family. IsaA subfamily.

It localises to the secreted. In terms of biological role, is able to cleave peptidoglycan. The sequence is that of Probable transglycosylase IsaA (isaA) from Staphylococcus aureus (strain USA300).